The primary structure comprises 103 residues: Small ribosomal subunit protein uS10 (103 aa).

This sequence belongs to the universal ribosomal protein uS10 family. In terms of assembly, part of the 30S ribosomal subunit.

Functionally, involved in the binding of tRNA to the ribosomes. The chain is Small ribosomal subunit protein uS10 from Stutzerimonas stutzeri (strain A1501) (Pseudomonas stutzeri).